The sequence spans 31 residues: Cytochrome b6-f complex subunit 6 (31 aa).

A helical transmembrane segment spans residues Ile-4–Asn-26.

Belongs to the PetL family. As to quaternary structure, the 4 large subunits of the cytochrome b6-f complex are cytochrome b6, subunit IV (17 kDa polypeptide, PetD), cytochrome f and the Rieske protein, while the 4 small subunits are PetG, PetL, PetM and PetN. The complex functions as a dimer.

It localises to the plastid. The protein resides in the chloroplast thylakoid membrane. In terms of biological role, component of the cytochrome b6-f complex, which mediates electron transfer between photosystem II (PSII) and photosystem I (PSI), cyclic electron flow around PSI, and state transitions. PetL is important for photoautotrophic growth as well as for electron transfer efficiency and stability of the cytochrome b6-f complex. This Amborella trichopoda protein is Cytochrome b6-f complex subunit 6.